Here is a 448-residue protein sequence, read N- to C-terminus: Probable cytosolic Fe-S cluster assembly factor Bm6838 (448 aa).

The [4Fe-4S] cluster site is built by cysteine 27, cysteine 66, cysteine 69, cysteine 72, cysteine 170, cysteine 226, cysteine 370, and cysteine 374.

This sequence belongs to the NARF family.

In terms of biological role, component of the cytosolic iron-sulfur (Fe/S) protein assembly machinery. Required for maturation of extramitochondrial Fe/S proteins. This is Probable cytosolic Fe-S cluster assembly factor Bm6838 from Brugia malayi (Filarial nematode worm).